The chain runs to 85 residues: Protein 19.2 (85 aa).

This is Protein 19.2 from Escherichia coli (Bacteriophage T7).